Here is a 587-residue protein sequence, read N- to C-terminus: Tyrosine-protein kinase transforming protein Src (587 aa).

Positions 1–58 (MGSSKSKPKDPSQRRRSLEPPDSTHHGGFPASQTPNKTAAPDTHRTPSRSFGTVATEP) are disordered. Residue Gly-2 is the site of N-myristoyl glycine; by host attachment. Residues 7 to 25 (KPKDPSQRRRSLEPPDSTH) are compositionally biased toward basic and acidic residues. An SH3 domain is found at 81 to 142 (GGVTTFVALY…PSNYVAPSDS (62 aa)). The 98-residue stretch at 148–245 (WYFGKITRRE…GLCHRLTNVC (98 aa)) folds into the SH2 domain. The Protein kinase domain occupies 267 to 520 (LRLEVKLGQG…YLQAFLEDYF (254 aa)). Residues 273–281 (LGQGCFGEV) and Lys-295 contribute to the ATP site. Residue Asp-386 is the Proton acceptor of the active site. Tyr-416 is modified (phosphotyrosine; by autocatalysis).

Belongs to the protein kinase superfamily. Tyr protein kinase family. SRC subfamily. Post-translationally, the phosphorylated form is termed pp60v-src.

It catalyses the reaction L-tyrosyl-[protein] + ATP = O-phospho-L-tyrosyl-[protein] + ADP + H(+). Its function is as follows. This phosphoprotein, required for both the initiation and the maintenance of neoplastic transformation, is a protein kinase that catalyzes the phosphorylation of tyrosine residues in vitro. This chain is Tyrosine-protein kinase transforming protein Src (V-SRC), found in Galliformes.